The chain runs to 194 residues: Xanthine phosphoribosyltransferase (194 aa).

Positions 20 and 27 each coordinate xanthine. 5-phospho-alpha-D-ribose 1-diphosphate is bound at residue 128–132; it reads ANGQA. K156 is a xanthine binding site.

This sequence belongs to the purine/pyrimidine phosphoribosyltransferase family. Xpt subfamily. Homodimer.

It localises to the cytoplasm. The catalysed reaction is XMP + diphosphate = xanthine + 5-phospho-alpha-D-ribose 1-diphosphate. It participates in purine metabolism; XMP biosynthesis via salvage pathway; XMP from xanthine: step 1/1. Converts the preformed base xanthine, a product of nucleic acid breakdown, to xanthosine 5'-monophosphate (XMP), so it can be reused for RNA or DNA synthesis. This is Xanthine phosphoribosyltransferase from Oceanobacillus iheyensis (strain DSM 14371 / CIP 107618 / JCM 11309 / KCTC 3954 / HTE831).